The chain runs to 194 residues: Small ribosomal subunit protein uS7 (194 aa).

Belongs to the universal ribosomal protein uS7 family. In terms of assembly, part of the 30S ribosomal subunit.

Its function is as follows. One of the primary rRNA binding proteins, it binds directly to 16S rRNA where it nucleates assembly of the head domain of the 30S subunit. Is located at the subunit interface close to the decoding center. In Sulfurisphaera tokodaii (strain DSM 16993 / JCM 10545 / NBRC 100140 / 7) (Sulfolobus tokodaii), this protein is Small ribosomal subunit protein uS7.